The primary structure comprises 155 residues: 6,7-dimethyl-8-ribityllumazine synthase (155 aa).

5-amino-6-(D-ribitylamino)uracil-binding positions include F23, 57–59 (AYE), and 81–83 (AVI). 86 to 87 (AT) contributes to the (2S)-2-hydroxy-3-oxobutyl phosphate binding site. Residue H89 is the Proton donor of the active site. F114 contacts 5-amino-6-(D-ribitylamino)uracil. R128 contributes to the (2S)-2-hydroxy-3-oxobutyl phosphate binding site.

Belongs to the DMRL synthase family.

The catalysed reaction is (2S)-2-hydroxy-3-oxobutyl phosphate + 5-amino-6-(D-ribitylamino)uracil = 6,7-dimethyl-8-(1-D-ribityl)lumazine + phosphate + 2 H2O + H(+). Its pathway is cofactor biosynthesis; riboflavin biosynthesis; riboflavin from 2-hydroxy-3-oxobutyl phosphate and 5-amino-6-(D-ribitylamino)uracil: step 1/2. Functionally, catalyzes the formation of 6,7-dimethyl-8-ribityllumazine by condensation of 5-amino-6-(D-ribitylamino)uracil with 3,4-dihydroxy-2-butanone 4-phosphate. This is the penultimate step in the biosynthesis of riboflavin. The protein is 6,7-dimethyl-8-ribityllumazine synthase of Desulfotalea psychrophila (strain LSv54 / DSM 12343).